The primary structure comprises 82 residues: MKNLLKILLIIAFANPVFASSMQMPDPASVTTTQIHAMSTNAQQDWIASLTANQYNMLSPDVQKWVMENTTDAQKQALGINQ.

The N-terminal stretch at 1 to 19 (MKNLLKILLIIAFANPVFA) is a signal peptide.

This is an uncharacterized protein from Rickettsia prowazekii (strain Madrid E).